We begin with the raw amino-acid sequence, 651 residues long: Mitogen-activated protein kinase kinase kinase 2 (651 aa).

A Protein kinase domain is found at 68-330; the sequence is WRKGQLIGRG…ASELLKHPFV (263 aa). ATP-binding positions include 74–82 and K97; that span reads IGRGAFGTV. A coiled-coil region spans residues 105–130; sequence CASKEKTQAHIQELEEEVKLLKNLSH. Residues K108 and K110 each participate in a glycyl lysine isopeptide (Lys-Gly) (interchain with G-Cter in ubiquitin) cross-link. Residue D196 is the Proton acceptor of the active site. 3 disordered regions span residues 460-483, 537-601, and 618-651; these read GNGE…DENE, RGFL…VALS, and KRRE…SPGK. The segment covering 464 to 477 has biased composition (basic and acidic residues); sequence TETKVSMEVDHPSY. Over residues 570–599 the composition is skewed to polar residues; sequence SPESGNSSGAPKNSNASAGAEQESNSQSVA. Residues 605–628 adopt a coiled-coil conformation; it reads RKWKEELDQELERKRREITRQAGM.

Belongs to the protein kinase superfamily. STE Ser/Thr protein kinase family. MAP kinase kinase kinase subfamily. In terms of tissue distribution, expressed in roots and flowers.

The protein resides in the cytoplasm. Its subcellular location is the cytoskeleton. The enzyme catalyses L-seryl-[protein] + ATP = O-phospho-L-seryl-[protein] + ADP + H(+). The catalysed reaction is L-threonyl-[protein] + ATP = O-phospho-L-threonyl-[protein] + ADP + H(+). In terms of biological role, involved in cortical microtubules organization and stabilization by regulating the phosphorylation state of microtubule-associated proteins such as MAP65-1. This Arabidopsis thaliana (Mouse-ear cress) protein is Mitogen-activated protein kinase kinase kinase 2 (ANP2).